The chain runs to 276 residues: Large ribosomal subunit protein uL2 (276 aa).

Positions 223–276 are disordered; it reads AVMNPVDHPHGGGEGKNSVGRKSPLTPWGKPALGIKTRGRKTSDKFIVRRRNEK. Residues 263-276 are compositionally biased toward basic and acidic residues; the sequence is KTSDKFIVRRRNEK.

The protein belongs to the universal ribosomal protein uL2 family. Part of the 50S ribosomal subunit. Forms a bridge to the 30S subunit in the 70S ribosome.

Its function is as follows. One of the primary rRNA binding proteins. Required for association of the 30S and 50S subunits to form the 70S ribosome, for tRNA binding and peptide bond formation. It has been suggested to have peptidyltransferase activity; this is somewhat controversial. Makes several contacts with the 16S rRNA in the 70S ribosome. The polypeptide is Large ribosomal subunit protein uL2 (Fusobacterium nucleatum subsp. nucleatum (strain ATCC 25586 / DSM 15643 / BCRC 10681 / CIP 101130 / JCM 8532 / KCTC 2640 / LMG 13131 / VPI 4355)).